Reading from the N-terminus, the 6874-residue chain is Nesprin-2 (6874 aa).

Positions 1-286 (MAASPVLPTE…MTYVAQFLKY (286 aa)) are actin-binding. At 1 to 6823 (MAASPVLPTE…RRSFLSRVIR (6823 aa)) the chain is on the cytoplasmic side. Calponin-homology (CH) domains are found at residues 31-136 (DTQK…LHFH) and 183-288 (WSAK…KYSK). Spectrin repeat units follow at residues 299–380 (AKVR…HQVA), 381–474 (AWRA…RINN), 475–577 (VLGK…QYIH), and 578–680 (NTKA…IQDQ). The stretch at 299–6767 (AKVRDALVWL…PDASLTSFDE (6469 aa)) forms a coiled coil. Residues 675–723 (VKIQDQPPGNSSGTSLSKESAMAAEPGGSRGEDVKAAEKQEVEDEESAG) are disordered. Residues 681-692 (PPGNSSGTSLSK) are compositionally biased toward polar residues. Over residues 704-714 (RGEDVKAAEKQ) the composition is skewed to basic and acidic residues. 31 Spectrin repeats span residues 727-834 (VNEE…KNLS), 835-928 (DEPL…LRHE), 929-1030 (ISLY…KCAS), 1120-1211 (TQRG…LLNT), 1262-1322 (DIRD…DALD), 1323-1409 (ALEG…QSKE), 1410-1514 (EGPP…ASVT), 1515-1626 (ESLE…KTEE), 1627-1728 (YGEN…AGGS), 1729-1820 (NSYA…TKKN), 1821-1928 (ALQD…AGEL), 1929-2026 (NNSF…EEED), 2027-2122 (KLPA…LANT), 2123-2233 (YLSH…SVQK), 2234-2350 (LEGH…LNSI), 2422-2503 (DERE…TLKK), 2504-2610 (TKER…KCFQ), 2611-2707 (QATE…EALE), 2708-2821 (PLNR…QLEL), 2822-2923 (KLEE…FLQN), 2924-3027 (NGSE…GKIK), 3028-3133 (QLDT…NMLL), 3134-3239 (ELQP…SLRA), 3240-3343 (DVLN…AQEA), 3344-3456 (EEER…QWGG), 3457-3563 (ELKR…TTRK), 3564-3669 (NKDL…SSEV), 3670-3767 (SKSS…ESRT), 3768-3870 (SQLN…QIME), 3871-3976 (ALPH…VTQE), and 3977-4074 (QNEL…KPSA). The tract at residues 2338–2397 (SAKQETENGLNSILKSKSSTEKHVKFSLPVEEMPATSEVPKPTRESAAVGESGGARETNT) is disordered. Polar residues predominate over residues 2344–2354 (ENGLNSILKSK). Disordered regions lie at residues 4062-4152 (KQEQ…ATIV), 4171-4193 (APDS…TDEG), 4326-4348 (FSED…DQPA), and 4401-4429 (HQEN…DSTL). The segment covering 4081–4091 (VAERDASERKL) has biased composition (basic and acidic residues). The residue at position 4096 (serine 4096) is a Phosphoserine. Over residues 4110 to 4122 (SSVKSEDGRRRTE) the composition is skewed to basic and acidic residues. A Spectrin 36 repeat occupies 4218–4337 (RSRPRPADIL…EDQHPSTLKK (120 aa)). The span at 4326 to 4345 (FSEDQHPSTLKKPSEPHDVD) shows a compositional bias: basic and acidic residues. Residues 4409-4429 (RQSASSSKVPSPGNAASDSTL) are compositionally biased toward polar residues. 17 Spectrin repeats span residues 4507 to 4626 (SMTE…RSYQ), 4627 to 4714 (NEVK…RARY), 4715 to 4823 (LELS…QSML), 4824 to 4929 (QKWE…QTLL), 4930 to 5037 (KHLL…QEKL), 5038 to 5150 (HQLQ…KIQH), 5151 to 5252 (LEQL…SQVH), 5253 to 5377 (QLRA…KAPH), 5378 to 5473 (NAHA…MLLA), 5474 to 5576 (KSNE…YSEL), 5577 to 5691 (QGNG…QWRF), 5692 to 5786 (FTTS…LSLG), 5787 to 5894 (EVIS…RVAI), 5895 to 6004 (RKQE…VKKL), 6005 to 6122 (KETF…EETW), 6123 to 6230 (RLWQ…LRYF), and 6231 to 6342 (TNQR…PGLD). Positions 5435–5459 (NSTLSDQLPQPEERSTPGLHSGQRH) are disordered. Serine 5772 is subject to Phosphoserine. Residues 6336 to 6473 (SHTPGLDDEK…TEAPVPTDAS (138 aa)) are disordered. A compositionally biased stretch (acidic residues) spans 6341-6354 (LDDEKEASENETDI). Phosphoserine occurs at positions 6348, 6371, 6400, 6417, 6418, 6419, and 6448. Basic and acidic residues predominate over residues 6355 to 6372 (EDPREIQADSWRKRRESE). 3 Spectrin repeats span residues 6450–6534 (SHSK…KLRL), 6535–6650 (KQTV…QCQD), and 6651–6767 (FHQL…SFDE). The interval 6790 to 6812 (EEEEEEEETDSRMPHLDSPGSSQ) is disordered. One can recognise a KASH domain in the interval 6815–6874 (RSFLSRVIRAALPLQLLLLLLLLLACLLPASEDDYSCTQANNFARSFYPMLRYTNGPPPT). A helical; Anchor for type IV membrane protein membrane pass occupies residues 6824–6844 (AALPLQLLLLLLLLLACLLPA). The Perinuclear space portion of the chain corresponds to 6845–6874 (SEDDYSCTQANNFARSFYPMLRYTNGPPPT). A sufficient for interaction with SUN2 region spans residues 6861–6874 (FYPMLRYTNGPPPT).

This sequence belongs to the nesprin family. In terms of assembly, core component of LINC complexes which are composed of inner nuclear membrane SUN domain-containing proteins coupled to outer nuclear membrane KASH domain-containing nesprins. SUN and KASH domain-containing proteins seem to bind each other promiscuously; however, some LINC complex constituents are tissue- or cell type-specific. At least SUN1/2-containing core LINC complexes are proposed to be hexameric composed of three protomers of each KASH and SUN domain-containing protein. The SUN2:SYNE2/KASH2 complex is a heterohexamer; the homotrimeric cloverleave-like conformation of the SUN domain is a prerequisite for LINC complex formation in which three separate SYNE2/KASH2 peptides bind at the interface of adjacent SUN domains. Interacts with EMD, LMNA, MKS3 and F-actin via its N-terminal domain. Interacts with DCTN1 and DYNC1I1/2; suggesting the association with the dynein-dynactin motor complex. Associates with kinesin motor complexes. Interacts with TMEM67. Interacts (via KASH domain) with TMEM258. Interacts with BROX; this interaction promotes SYN2 ubiquitination and facilitates the relaxation of mechanical stress imposed by compressive actin fibers at the rupture site. The disulfid bond with SUN2 is required for stability of the SUN2:SYNE2/KASH2 LINC complex under tensile forces though not required for the interaction. As to expression, C-terminal isoforms are highly expressed in the brain, hert and skeletal muscle. Isoform 1 (Nesprin-2 Giant) is most prevalent in the brain, skin, kidney and skeletal muscle.

Its subcellular location is the nucleus outer membrane. It localises to the sarcoplasmic reticulum membrane. The protein localises to the cell membrane. It is found in the cytoplasm. The protein resides in the cytoskeleton. Its subcellular location is the mitochondrion. It localises to the nucleus. The protein localises to the nucleoplasm. Its function is as follows. Multi-isomeric modular protein which forms a linking network between organelles and the actin cytoskeleton to maintain the subcellular spatial organization. As a component of the LINC (LInker of Nucleoskeleton and Cytoskeleton) complex involved in the connection between the nuclear lamina and the cytoskeleton. The nucleocytoplasmic interactions established by the LINC complex play an important role in the transmission of mechanical forces across the nuclear envelope and in nuclear movement and positioning. Specifically, SYNE2 and SUN2 assemble in arrays of transmembrane actin-associated nuclear (TAN) lines which are bound to F-actin cables and couple the nucleus to retrograde actin flow during actin-dependent nuclear movement. May be involved in nucleus-centrosome attachment. During interkinetic nuclear migration (INM) at G2 phase and nuclear migration in neural progenitors its LINC complex association with SUN1/2 and probable association with cytoplasmic dynein-dynactin motor complexes functions to pull the nucleus toward the centrosome; SYNE1 and SYNE2 seem to act redundantly in cerebellum, midbrain, brain stem, and other brain regions except cerebral cortex and hippocampus. During INM at G1 phase mediates respective LINC complex association with kinesin to push the nucleus away from the centrosome. Involved in nuclear migration in retinal photoreceptor progenitors. Required for centrosome migration to the apical cell surface during early ciliogenesis. The polypeptide is Nesprin-2 (Mus musculus (Mouse)).